The sequence spans 477 residues: Ribulose bisphosphate carboxylase large chain (477 aa).

Residues 1 to 2 constitute a propeptide that is removed on maturation; that stretch reads MS. P3 is subject to N-acetylproline. An N6,N6,N6-trimethyllysine modification is found at K14. Substrate contacts are provided by N123 and T173. Residue K175 is the Proton acceptor of the active site. Residue K177 participates in substrate binding. Mg(2+)-binding residues include K201, D203, and E204. K201 is modified (N6-carboxylysine). The Proton acceptor role is filled by H294. Residues R295, H327, and S379 each contribute to the substrate site.

This sequence belongs to the RuBisCO large chain family. Type I subfamily. In terms of assembly, heterohexadecamer of 8 large chains and 8 small chains; disulfide-linked. The disulfide link is formed within the large subunit homodimers. Mg(2+) serves as cofactor. Post-translationally, the disulfide bond which can form in the large chain dimeric partners within the hexadecamer appears to be associated with oxidative stress and protein turnover.

The protein localises to the plastid. It is found in the chloroplast. It catalyses the reaction 2 (2R)-3-phosphoglycerate + 2 H(+) = D-ribulose 1,5-bisphosphate + CO2 + H2O. The enzyme catalyses D-ribulose 1,5-bisphosphate + O2 = 2-phosphoglycolate + (2R)-3-phosphoglycerate + 2 H(+). In terms of biological role, ruBisCO catalyzes two reactions: the carboxylation of D-ribulose 1,5-bisphosphate, the primary event in carbon dioxide fixation, as well as the oxidative fragmentation of the pentose substrate in the photorespiration process. Both reactions occur simultaneously and in competition at the same active site. In Manihot esculenta (Cassava), this protein is Ribulose bisphosphate carboxylase large chain.